A 298-amino-acid polypeptide reads, in one-letter code: 4-hydroxy-tetrahydrodipicolinate synthase (298 aa).

Position 51 (T51) interacts with pyruvate. Y139 serves as the catalytic Proton donor/acceptor. The active-site Schiff-base intermediate with substrate is the K167. I209 is a pyruvate binding site.

Belongs to the DapA family. As to quaternary structure, homotetramer; dimer of dimers.

The protein resides in the cytoplasm. The catalysed reaction is L-aspartate 4-semialdehyde + pyruvate = (2S,4S)-4-hydroxy-2,3,4,5-tetrahydrodipicolinate + H2O + H(+). It participates in amino-acid biosynthesis; L-lysine biosynthesis via DAP pathway; (S)-tetrahydrodipicolinate from L-aspartate: step 3/4. Functionally, catalyzes the condensation of (S)-aspartate-beta-semialdehyde [(S)-ASA] and pyruvate to 4-hydroxy-tetrahydrodipicolinate (HTPA). This Pasteurella multocida (strain Pm70) protein is 4-hydroxy-tetrahydrodipicolinate synthase.